The sequence spans 42 residues: uncharacterized protein (42 aa).

The helical transmembrane segment at 18–38 (VGAISLTVMMILFFIAIVWFL) threads the bilayer.

The protein resides in the host membrane. This is an uncharacterized protein from His1 virus (isolate Australia/Victoria) (His1V).